A 378-amino-acid chain; its full sequence is Rhodopsin (378 aa).

Topologically, residues 1–53 are extracellular; sequence MMSIASGPSHAAYTWASQGGGFGNQTVVDKVPPEMLHMVDAHWYQFPPMNPLW. Asn-24 carries N-linked (GlcNAc...) asparagine glycosylation. The chain crosses the membrane as a helical span at residues 54 to 78; the sequence is HALLGFVIGVLGVISVIGNGMVIYI. Topologically, residues 79–90 are cytoplasmic; sequence FTTTKSLRTPSN. Residues 91–115 traverse the membrane as a helical segment; sequence LLVVNLAISDFLMMLCMSPAMVINC. The Extracellular segment spans residues 116-130; that stretch reads YYETWVLGPLFCELY. An intrachain disulfide couples Cys-127 to Cys-204. Residues 131-150 traverse the membrane as a helical segment; sequence GLAGSLFGCASIWTMTMIAF. The Cytoplasmic segment spans residues 151–169; the sequence is DRYNVIVKGLSAKPMTING. A helical membrane pass occupies residues 170-193; it reads ALIRILTIWFFTLAWTIAPMFGWN. The Extracellular portion of the chain corresponds to 194 to 217; that stretch reads RYVPEGNMTACGTDYLTKDLFSRS. Asn-200 is a glycosylation site (N-linked (GlcNAc...) asparagine). Residues 218–245 traverse the membrane as a helical segment; that stretch reads YILIYSIFVYFTPLFLIIYSYFFIIQAV. Topologically, residues 246-280 are cytoplasmic; sequence AAHEKNMREQAKKMNVASLRSAENQSTSAECKLAK. A helical membrane pass occupies residues 281–304; the sequence is VALMTISLWFMAWTPYLVINYSGI. The Extracellular segment spans residues 305–311; it reads FETTKIS. Residues 312–336 traverse the membrane as a helical segment; it reads PLFTIWGSLFAKANAVYNPIVYGIS. At Lys-323 the chain carries N6-(retinylidene)lysine. Residues 337 to 378 are Cytoplasmic-facing; that stretch reads HPKYRAALFQKFPSLACTTEPTGADTMSTTTTVTEGNEKPAA.

Belongs to the G-protein coupled receptor 1 family. Opsin subfamily. Post-translationally, phosphorylated on some or all of the serine and threonine residues present in the C-terminal region.

It is found in the membrane. Visual pigments are the light-absorbing molecules that mediate vision. They consist of an apoprotein, opsin, covalently linked to cis-retinal. The polypeptide is Rhodopsin (Camponotus atriceps (Florida carpenter ant)).